Here is a 409-residue protein sequence, read N- to C-terminus: Endoglucanase B (409 aa).

Substrate-binding positions include His-61, 65-66, Tyr-92, and His-127; that span reads WY. The active-site Proton donor is the Glu-165. Substrate is bound at residue Tyr-228. Glu-254 acts as the Nucleophile in catalysis. Substrate is bound by residues 260–261, Trp-288, and 293–295; these read AT and KDE. Residues 326–372 are disordered; it reads IRESATTPPSDPTPPSDPDPGEPEPDPGEPDPTPPSDPGDYPAWDPN. A compositionally biased stretch (pro residues) spans 334-343; that stretch reads PSDPTPPSDP. The span at 344-354 shows a compositional bias: acidic residues; it reads DPGEPEPDPGE.

It belongs to the glycosyl hydrolase 5 (cellulase A) family.

The catalysed reaction is Endohydrolysis of (1-&gt;4)-beta-D-glucosidic linkages in cellulose, lichenin and cereal beta-D-glucans.. This Evansella cellulosilytica (strain ATCC 21833 / DSM 2522 / FERM P-1141 / JCM 9156 / N-4) (Bacillus cellulosilyticus) protein is Endoglucanase B (celB).